The primary structure comprises 228 residues: Urease accessory protein UreF (228 aa).

It belongs to the UreF family. UreD, UreF and UreG form a complex that acts as a GTP-hydrolysis-dependent molecular chaperone, activating the urease apoprotein by helping to assemble the nickel containing metallocenter of UreC. The UreE protein probably delivers the nickel.

It localises to the cytoplasm. In terms of biological role, required for maturation of urease via the functional incorporation of the urease nickel metallocenter. The polypeptide is Urease accessory protein UreF (Prochlorococcus marinus (strain MIT 9215)).